The following is a 1368-amino-acid chain: DNA-directed RNA polymerase subunit beta (1368 aa).

It belongs to the RNA polymerase beta chain family. As to quaternary structure, the RNAP catalytic core consists of 2 alpha, 1 beta, 1 beta' and 1 omega subunit. When a sigma factor is associated with the core the holoenzyme is formed, which can initiate transcription.

It carries out the reaction RNA(n) + a ribonucleoside 5'-triphosphate = RNA(n+1) + diphosphate. In terms of biological role, DNA-dependent RNA polymerase catalyzes the transcription of DNA into RNA using the four ribonucleoside triphosphates as substrates. This is DNA-directed RNA polymerase subunit beta from Cupriavidus necator (strain ATCC 17699 / DSM 428 / KCTC 22496 / NCIMB 10442 / H16 / Stanier 337) (Ralstonia eutropha).